A 424-amino-acid chain; its full sequence is Hemagglutinin-esterase (424 aa).

A signal peptide spans 1–16; it reads MFLLPRFVLVSCIIGS. The tract at residues 7–127 is esterase domain 1; sequence FVLVSCIIGS…SNDIWMQNKG (121 aa). At 17 to 392 the chain is on the virion surface side; that stretch reads LGFDNPPTNV…PICVYDPLPL (376 aa). Residue Ser-40 is the Nucleophile of the active site. A disulfide bridge links Cys-44 with Cys-65. Asn-54, Asn-89, Asn-153, Asn-236, and Asn-301 each carry an N-linked (GlcNAc...) asparagine; by host glycan. 3 cysteine pairs are disulfide-bonded: Cys-113–Cys-162, Cys-197–Cys-276, and Cys-205–Cys-249. Residues 128–266 form a receptor binding region; that stretch reads LFYTQVYKNM…GNYLAISNEL (139 aa). Positions 267 to 379 are esterase domain 2; the sequence is LLTVPTKAIC…RCPTAADINN (113 aa). Cys-307 and Cys-312 are joined by a disulfide. Residue Asn-316 is glycosylated (N-linked (GlcNAc...) asparagine; by host). Residues Asp-326 and His-329 each act as charge relay system in the active site. The cysteines at positions 347 and 371 are disulfide-linked. Asn-358 carries an N-linked (GlcNAc...) asparagine; by host glycan. Residues 393 to 413 traverse the membrane as a helical segment; the sequence is ILLGILLGVAVIIIVVLLLYF. Topologically, residues 414 to 424 are intravirion; it reads MVDNGTRLHDA. Asn-417 is a glycosylation site (N-linked (GlcNAc...) asparagine; by host).

The protein belongs to the influenza type C/coronaviruses hemagglutinin-esterase family. In terms of assembly, homodimer; disulfide-linked. Forms a complex with the M protein in the pre-Golgi. Associates then with S-M complex to form a ternary complex S-M-HE. Post-translationally, N-glycosylated in the host RER.

It is found in the virion membrane. The protein resides in the host cell membrane. The enzyme catalyses N-acetyl-9-O-acetylneuraminate + H2O = N-acetylneuraminate + acetate + H(+). It catalyses the reaction N-acetyl-4-O-acetylneuraminate + H2O = N-acetylneuraminate + acetate + H(+). In terms of biological role, structural protein that makes short spikes at the surface of the virus. Contains receptor binding and receptor-destroying activities. Mediates de-O-acetylation of N-acetyl-4-O-acetylneuraminic acid, which is probably the receptor determinant recognized by the virus on the surface of erythrocytes and susceptible cells. This receptor-destroying activity is important for virus release as it probably helps preventing self-aggregation and ensures the efficient spread of the progeny virus from cell to cell. May serve as a secondary viral attachment protein for initiating infection, the spike protein being the major one. May become a target for both the humoral and the cellular branches of the immune system. This Bovine coronavirus (strain LY-138) (BCoV) protein is Hemagglutinin-esterase.